Reading from the N-terminus, the 544-residue chain is Pectinesterase 3 (544 aa).

Residues asparagine 174, asparagine 257, and asparagine 291 are each glycosylated (N-linked (GlcNAc...) asparagine). Residues threonine 306 and glutamine 336 each coordinate substrate. Catalysis depends on aspartate 359, which acts as the Proton donor. The active-site Nucleophile is the aspartate 380. Substrate-binding residues include arginine 448 and tryptophan 450. The N-linked (GlcNAc...) asparagine glycan is linked to asparagine 532.

This sequence in the N-terminal section; belongs to the PMEI family. The protein in the C-terminal section; belongs to the pectinesterase family.

It localises to the secreted. Its subcellular location is the cell wall. The catalysed reaction is [(1-&gt;4)-alpha-D-galacturonosyl methyl ester](n) + n H2O = [(1-&gt;4)-alpha-D-galacturonosyl](n) + n methanol + n H(+). It participates in glycan metabolism; pectin degradation; 2-dehydro-3-deoxy-D-gluconate from pectin: step 1/5. In terms of biological role, acts in the modification of cell walls via demethylesterification of cell wall pectin. The polypeptide is Pectinesterase 3 (PME3) (Solanum lycopersicum (Tomato)).